Consider the following 140-residue polypeptide: Transcription antitermination protein NusB (140 aa).

This sequence belongs to the NusB family.

Involved in transcription antitermination. Required for transcription of ribosomal RNA (rRNA) genes. Binds specifically to the boxA antiterminator sequence of the ribosomal RNA (rrn) operons. The sequence is that of Transcription antitermination protein NusB from Streptococcus pneumoniae (strain JJA).